A 346-amino-acid polypeptide reads, in one-letter code: SUMO-activating enzyme subunit 1 (346 aa).

At Met-1 the chain carries N-acetylmethionine. Val-2 bears the N-acetylvaline; in SUMO-activating enzyme subunit 1, N-terminally processed mark. Residue Ser-12 is modified to Phosphoserine. Lys-198 is subject to N6-acetyllysine.

This sequence belongs to the ubiquitin-activating E1 family. Heterodimer of SAE1 and UBA2/SAE2. The heterodimer corresponds to the two domains that are encoded on a single polypeptide chain in ubiquitin-activating enzyme E1. Interacts with UBE2I. Expression level increases during S phase and drops in G2 phase (at protein level).

The protein localises to the nucleus. It functions in the pathway protein modification; protein sumoylation. In terms of biological role, the heterodimer acts as an E1 ligase for SUMO1, SUMO2, SUMO3, and probably SUMO4. It mediates ATP-dependent activation of SUMO proteins followed by formation of a thioester bond between a SUMO protein and a conserved active site cysteine residue on UBA2/SAE2. This chain is SUMO-activating enzyme subunit 1 (SAE1), found in Homo sapiens (Human).